Reading from the N-terminus, the 799-residue chain is Phenylalanine--tRNA ligase beta subunit (799 aa).

Residues 39 to 150 (GKGFSGVIVG…EHLQAGTALN (112 aa)) enclose the tRNA-binding domain. A B5 domain is found at 402–478 (FLELTIRCRL…RIYGYDHIPR (77 aa)). Mg(2+)-binding residues include Asp-456, Asp-462, Glu-465, and Glu-466. Residues 705-798 (AIYPGSERDW…VSQKFANDLK (94 aa)) form the FDX-ACB domain.

This sequence belongs to the phenylalanyl-tRNA synthetase beta subunit family. Type 1 subfamily. In terms of assembly, tetramer of two alpha and two beta subunits. Requires Mg(2+) as cofactor.

The protein localises to the cytoplasm. It catalyses the reaction tRNA(Phe) + L-phenylalanine + ATP = L-phenylalanyl-tRNA(Phe) + AMP + diphosphate + H(+). The chain is Phenylalanine--tRNA ligase beta subunit from Protochlamydia amoebophila (strain UWE25).